A 155-amino-acid polypeptide reads, in one-letter code: Putative pre-16S rRNA nuclease (155 aa).

This sequence belongs to the YqgF nuclease family.

It localises to the cytoplasm. Functionally, could be a nuclease involved in processing of the 5'-end of pre-16S rRNA. The protein is Putative pre-16S rRNA nuclease of Xylella fastidiosa (strain M23).